The chain runs to 171 residues: Minor capsid protein 3 (171 aa).

Interacts with the major capsid protein.

It localises to the virion. In terms of biological role, one of the minor capsid proteins that constitute a network internal to the major capsid proteins and outside the lipid membrane. The minor capsid proteins glue and stabilize the capsomers. This Chlorella (PBCV-1) protein is Minor capsid protein 3.